A 278-amino-acid polypeptide reads, in one-letter code: 4-diphosphocytidyl-2-C-methyl-D-erythritol kinase (278 aa).

Residue lysine 9 is part of the active site. 93-103 (PISAGLAGGSS) serves as a coordination point for ATP. The active site involves aspartate 135.

The protein belongs to the GHMP kinase family. IspE subfamily.

It catalyses the reaction 4-CDP-2-C-methyl-D-erythritol + ATP = 4-CDP-2-C-methyl-D-erythritol 2-phosphate + ADP + H(+). The protein operates within isoprenoid biosynthesis; isopentenyl diphosphate biosynthesis via DXP pathway; isopentenyl diphosphate from 1-deoxy-D-xylulose 5-phosphate: step 3/6. Functionally, catalyzes the phosphorylation of the position 2 hydroxy group of 4-diphosphocytidyl-2C-methyl-D-erythritol. The sequence is that of 4-diphosphocytidyl-2-C-methyl-D-erythritol kinase from Finegoldia magna (strain ATCC 29328 / DSM 20472 / WAL 2508) (Peptostreptococcus magnus).